The following is a 441-amino-acid chain: N-succinylarginine dihydrolase (441 aa).

Substrate contacts are provided by residues 19-28, Asn110, and 137-138; these read AGLSFGNEAS and HR. Glu174 is a catalytic residue. Arg212 lines the substrate pocket. Residue His248 is part of the active site. Asp250 and Asn359 together coordinate substrate. Cys365 functions as the Nucleophile in the catalytic mechanism.

This sequence belongs to the succinylarginine dihydrolase family. In terms of assembly, homodimer.

It catalyses the reaction N(2)-succinyl-L-arginine + 2 H2O + 2 H(+) = N(2)-succinyl-L-ornithine + 2 NH4(+) + CO2. Its pathway is amino-acid degradation; L-arginine degradation via AST pathway; L-glutamate and succinate from L-arginine: step 2/5. Its function is as follows. Catalyzes the hydrolysis of N(2)-succinylarginine into N(2)-succinylornithine, ammonia and CO(2). The chain is N-succinylarginine dihydrolase from Erwinia tasmaniensis (strain DSM 17950 / CFBP 7177 / CIP 109463 / NCPPB 4357 / Et1/99).